The sequence spans 104 residues: Transcription and mRNA export factor ENY2 (104 aa).

The span at 1–14 shows a compositional bias: basic and acidic residues; it reads MADYGSDKKSRDNQ. The disordered stretch occupies residues 1–22; that stretch reads MADYGSDKKSRDNQMRSAINQQ.

It belongs to the ENY2 family. As to quaternary structure, component of the nuclear pore complex (NPC)-associated TREX-2 complex (transcription and export complex 2). Component of the SAGA transcription coactivator-HAT complex. Within the SAGA complex, participates in a subcomplex of SAGA called the DUB module (deubiquitination module).

It localises to the nucleus. The protein localises to the nucleoplasm. Its function is as follows. Involved in mRNA export coupled transcription activation by association with both the TREX-2 and the SAGA complexes. The transcription regulatory histone acetylation (HAT) complex SAGA is a multiprotein complex that activates transcription by remodeling chromatin and mediating histone acetylation and deubiquitination. Within the SAGA complex, participates in a subcomplex that specifically deubiquitinates histones. The SAGA complex is recruited to specific gene promoters by activators, where it is required for transcription. The TREX-2 complex functions in docking export-competent ribonucleoprotein particles (mRNPs) to the nuclear entrance of the nuclear pore complex (nuclear basket). TREX-2 participates in mRNA export and accurate chromatin positioning in the nucleus by tethering genes to the nuclear periphery. The protein is Transcription and mRNA export factor ENY2 of Ciona intestinalis (Transparent sea squirt).